The primary structure comprises 245 residues: Eukaryotic translation initiation factor 4E type 2 (245 aa).

Over residues 1–38 (MNNKFDALKDDDSGDHDQNEENSTQKDGEKEKTERDKN) the composition is skewed to basic and acidic residues. A disordered region spans residues 1-52 (MNNKFDALKDDDSGDHDQNEENSTQKDGEKEKTERDKNQSSSKRKAVVPGPA). Serine 13 carries the phosphoserine modification. The tract at residues 54 to 57 (HPLQ) is EIF4EBP1/2/3 binding. 78–79 (YE) provides a ligand contact to mRNA. The EIF4EBP1/2/3 binding stretch occupies residues 95-99 (WRFYS). Residues histidine 110 and 124 to 125 (WE) contribute to the mRNA site. At lysine 134 the chain carries N6-acetyllysine; alternate. Residue lysine 134 forms a Glycyl lysine isopeptide (Lys-Gly) (interchain with G-Cter in ISG15); alternate linkage. Positions 150-157 (NLILAMLG) are EIF4EBP1/2/3 binding. MRNA is bound by residues 174 to 179 (RFQEDI) and 222 to 224 (KMP). Residue lysine 222 forms a Glycyl lysine isopeptide (Lys-Gly) (interchain with G-Cter in ISG15) linkage.

This sequence belongs to the eukaryotic initiation factor 4E family. In terms of assembly, interacts with EIF4EBP1, EIF4EBP2 and EIF4EBP3. Does not interact with eIF4G (EIF4G1, EIF4G2 or EIF4G3). Component of the 4EHP-GYF2 complex, at least composed of EIF4E2, GIGYF2 and ZNF598. Interacts with GIGYF2 (via the 4EHP-binding motif); the interaction is direct. Interacts with EIF4ENIF1/4E-T (via YXXXXLphi motif); increasing affinity for the 7-methylguanosine-containing mRNA cap. Ubiquitinated by ARIH1. The consequences of ubiquitination are however unclear: according to a report, EIF4E2 ubiquitination leads to promote EIF4E2 cap-binding and protein translation arrest. According to another report ubiquitination leads to its subsequent degradation. In terms of processing, ISGylation enhances its cap structure-binding activity and translation-inhibition activity.

Its subcellular location is the cytoplasm. It localises to the P-body. Recognizes and binds the 7-methylguanosine-containing mRNA cap during an early step in the initiation. Acts as a repressor of translation initiation. In contrast to EIF4E, it is unable to bind eIF4G (EIF4G1, EIF4G2 or EIF4G3), suggesting that it acts by competing with EIF4E and block assembly of eIF4F at the cap. In P-bodies, component of a complex that promotes miRNA-mediated translational repression. Involved in virus-induced host response by mediating miRNA MIR34A-induced translational silencing which controls IFNB1 production by a negative feedback mechanism. Its function is as follows. Component of the 4EHP-GYF2 complex, a multiprotein complex that acts as a repressor of translation initiation. In association with GIGYF2, assists ribosome-associated quality control (RQC) by sequestering the mRNA cap, blocking ribosome initiation and decreasing the translational load on problematic messages. Part of a pathway that works in parallel to RQC-mediated degradation of the stalled nascent polypeptide. GIGYF2 and EIF4E2 work downstream and independently of ZNF598, which seems to work as a scaffold that can recruit them to faulty mRNA even if alternative recruitment mechanisms may exist. In terms of biological role, (Microbial infection) Upon SARS coronavirus-2/SARS-CoV-2 infection, the interaction with non-structural protein 2 (nsp2) with GIGYF2 enhances GIGYF2 binding to EIF4E2 and increases repression of translation initiation of genes involved in antiviral innate immune response such as IFNB1. The protein is Eukaryotic translation initiation factor 4E type 2 of Homo sapiens (Human).